Here is a 224-residue protein sequence, read N- to C-terminus: Germin-like protein 8-12 (224 aa).

Residues 1-23 (MASSSLFLLGALLVLASWQAIVA) form the signal peptide. Cysteines 33 and 48 form a disulfide. A Cupin type-1 domain is found at 60–213 (FNAAKFDMPR…AFQVEKKLID (154 aa)). N-linked (GlcNAc...) asparagine glycosylation occurs at asparagine 78. Residues histidine 111, histidine 113, glutamate 118, and histidine 158 each coordinate Mn(2+).

It belongs to the germin family. As to quaternary structure, oligomer (believed to be a pentamer but probably hexamer).

The protein localises to the secreted. It is found in the extracellular space. It localises to the apoplast. Functionally, plays a role in broad-spectrum disease resistance. Probably has no oxalate oxidase activity even if the active site is conserved. The polypeptide is Germin-like protein 8-12 (Oryza sativa subsp. japonica (Rice)).